The following is a 1026-amino-acid chain: Chromodomain-helicase-DNA-binding protein 1-like (1026 aa).

The 166-residue stretch at 47 to 212 (SLCMKNQQGC…YSLLTFIQPS (166 aa)) folds into the Helicase ATP-binding domain. An ATP-binding site is contributed by 60 to 67 (DEMGLGKT). The DEAH box motif lies at 163 to 166 (DEAH). Positions 340–494 (LLDSMLAYLQ…EGRFSLLDQA (155 aa)) constitute a Helicase C-terminal domain. Residues 540 to 668 (LTDEEHAKLN…EELNYKKKMA (129 aa)) adopt a coiled-coil conformation. Residues 594 to 628 (AEMEDAEKEGRALRNKAGVSLSGPLINPARKKRPL) are regulatory linker segment (RLS). The tract at residues 606 to 655 (LRNKAGVSLSGPLINPARKKRPLTEAELEERRQKRQAAAAKRAKLQEERK) is disordered. The tract at residues 608-666 (NKAGVSLSGPLINPARKKRPLTEAELEERRQKRQAAAAKRAKLQEERKKQQEELNYKKK) is required for ATPase activity. Residues 697-870 (HVSFSSTDSD…IFTSIYYYRR (174 aa)) enclose the Macro domain. The span at 877–907 (VSSTASTTTPSSSKPAASSPSESPHSSSPPA) shows a compositional bias: low complexity. Residues 877 to 929 (VSSTASTTTPSSSKPAASSPSESPHSSSPPANREGLTKSAELSTTSHEGPGAP) form a disordered region. The 94-residue stretch at 930–1023 (GLADFMRGVH…RKVSVSKYVI (94 aa)) folds into the BRCT domain.

This sequence belongs to the SNF2/RAD54 helicase family. In terms of assembly, interacts with nucleosomes; interacts with the acidic patch of histones.

It localises to the nucleus. Its subcellular location is the chromosome. The enzyme catalyses ATP + H2O = ADP + phosphate + H(+). With respect to regulation, adopts an inactive conformation in absence of DNA damage. Binding to poly-ADP-ribosylated histones activates the ATP-dependent chromatin remodeler activity. Its function is as follows. ATP-dependent chromatin remodeler that mediates chromatin-remodeling following DNA damage. Recruited to DNA damage sites through interaction with poly-ADP-ribose: specifically recognizes and binds histones that are poly-ADP-ribosylated on serine residues in response to DNA damage. Poly-ADP-ribose-binding activates the ATP-dependent chromatin remodeler activity, thereby regulating chromatin during DNA repair. Catalyzes nucleosome sliding away from DNA breaks in an ATP-dependent manner. The protein is Chromodomain-helicase-DNA-binding protein 1-like (chd1l) of Danio rerio (Zebrafish).